Reading from the N-terminus, the 510-residue chain is MRALLSVSDKEGIVEFGKELENLGFEILSTGGTFKFLKENGIKVMEVSDFTKSPELFEGRVKTLHPKIHGGILHKRSNENHIKQAKENEILGIDLVCVNLYPFKKTTIMSDDFDEIIENIDIGGPAMIRSAAKNYKDVMVLCDPLDYEKVIETLKKGQIDENFRLNLMIKAYEHTANYDAYIANYMNERFNGGFGASKFIVGQKVFDTKYGENPHQKGALYEFDAFFSANFKALKGEASFNNLTDINAALNLASSFDKAPAIAIVKHGNPCGFAIKENLVQSYIHALKCDSVSAYGGVVAINGTLDEALANKINEIYVEVIIAANVDEKALAVFEGKKRIKIFTQESSFLIRSFDKYDFKHIDGGFVYQNSDEVGEDEFKNAKLMSQREASKEELKDLEIAMKIAAFTKSNNVVYVKNGAMVAIGMGMTSRIDAAKVAIAKAKEMGLDLQGCVLASEAFFPFRDSIDEASKVGVKAIVEPGGSIRDDEVVKAADEYGMALYFTGVRHFLH.

Residues 1–142 (MRALLSVSDK…KNYKDVMVLC (142 aa)) form the MGS-like domain.

This sequence belongs to the PurH family.

It catalyses the reaction (6R)-10-formyltetrahydrofolate + 5-amino-1-(5-phospho-beta-D-ribosyl)imidazole-4-carboxamide = 5-formamido-1-(5-phospho-D-ribosyl)imidazole-4-carboxamide + (6S)-5,6,7,8-tetrahydrofolate. It carries out the reaction IMP + H2O = 5-formamido-1-(5-phospho-D-ribosyl)imidazole-4-carboxamide. It functions in the pathway purine metabolism; IMP biosynthesis via de novo pathway; 5-formamido-1-(5-phospho-D-ribosyl)imidazole-4-carboxamide from 5-amino-1-(5-phospho-D-ribosyl)imidazole-4-carboxamide (10-formyl THF route): step 1/1. The protein operates within purine metabolism; IMP biosynthesis via de novo pathway; IMP from 5-formamido-1-(5-phospho-D-ribosyl)imidazole-4-carboxamide: step 1/1. In Campylobacter jejuni (strain RM1221), this protein is Bifunctional purine biosynthesis protein PurH.